The primary structure comprises 319 residues: Annexin A4 (319 aa).

Residue Thr7 is modified to Phosphothreonine. At Ser12 the chain carries Phosphoserine. Annexin repeat units lie at residues 14–85 (FNAT…GMMT), 86–157 (PTVL…SLTA), 169–241 (ALVR…AIVK), and 245–316 (NKPA…ILCG). Lys213, Lys293, and Lys300 each carry N6-acetyllysine.

Belongs to the annexin family.

It is found in the zymogen granule membrane. Calcium/phospholipid-binding protein which promotes membrane fusion and is involved in exocytosis. This Rattus norvegicus (Rat) protein is Annexin A4 (Anxa4).